Reading from the N-terminus, the 393-residue chain is Formate-dependent phosphoribosylglycinamide formyltransferase (393 aa).

N(1)-(5-phospho-beta-D-ribosyl)glycinamide-binding positions include 22-23 (EL) and E82. Residues R114, K155, 160 to 165 (SSGHGQ), 195 to 198 (EGFV), and E203 contribute to the ATP site. The ATP-grasp domain maps to 119–308 (RLAAEELGLP…EFALHARAIL (190 aa)). Residues E267 and E279 each contribute to the Mg(2+) site. Residues D286, K356, and 363–364 (RR) each bind N(1)-(5-phospho-beta-D-ribosyl)glycinamide.

This sequence belongs to the PurK/PurT family. Homodimer.

It catalyses the reaction N(1)-(5-phospho-beta-D-ribosyl)glycinamide + formate + ATP = N(2)-formyl-N(1)-(5-phospho-beta-D-ribosyl)glycinamide + ADP + phosphate + H(+). It participates in purine metabolism; IMP biosynthesis via de novo pathway; N(2)-formyl-N(1)-(5-phospho-D-ribosyl)glycinamide from N(1)-(5-phospho-D-ribosyl)glycinamide (formate route): step 1/1. In terms of biological role, involved in the de novo purine biosynthesis. Catalyzes the transfer of formate to 5-phospho-ribosyl-glycinamide (GAR), producing 5-phospho-ribosyl-N-formylglycinamide (FGAR). Formate is provided by PurU via hydrolysis of 10-formyl-tetrahydrofolate. In Pasteurella multocida (strain Pm70), this protein is Formate-dependent phosphoribosylglycinamide formyltransferase.